The chain runs to 692 residues: Elongation factor G (692 aa).

One can recognise a tr-type G domain in the interval 8–282; sequence EKTRNIGIMA…AVLDYLPAPT (275 aa). GTP contacts are provided by residues 17-24, 81-85, and 135-138; these read AHIDAGKT, DTPGH, and NKMD.

This sequence belongs to the TRAFAC class translation factor GTPase superfamily. Classic translation factor GTPase family. EF-G/EF-2 subfamily.

The protein localises to the cytoplasm. Catalyzes the GTP-dependent ribosomal translocation step during translation elongation. During this step, the ribosome changes from the pre-translocational (PRE) to the post-translocational (POST) state as the newly formed A-site-bound peptidyl-tRNA and P-site-bound deacylated tRNA move to the P and E sites, respectively. Catalyzes the coordinated movement of the two tRNA molecules, the mRNA and conformational changes in the ribosome. This Bacillus licheniformis (strain ATCC 14580 / DSM 13 / JCM 2505 / CCUG 7422 / NBRC 12200 / NCIMB 9375 / NCTC 10341 / NRRL NRS-1264 / Gibson 46) protein is Elongation factor G.